The following is a 345-amino-acid chain: Protein RecA (345 aa).

65 to 72 (GPESSGKT) is a binding site for ATP.

It belongs to the RecA family.

The protein resides in the cytoplasm. Can catalyze the hydrolysis of ATP in the presence of single-stranded DNA, the ATP-dependent uptake of single-stranded DNA by duplex DNA, and the ATP-dependent hybridization of homologous single-stranded DNAs. It interacts with LexA causing its activation and leading to its autocatalytic cleavage. The polypeptide is Protein RecA (Hahella chejuensis (strain KCTC 2396)).